Reading from the N-terminus, the 232-residue chain is Platelet-activating factor acetylhydrolase IB subunit alpha1 (232 aa).

The tract at residues 1–20 is disordered; it reads MSGEGENPASKPTPVQDVQG. Serine 2 carries the post-translational modification N-acetylserine. Serine 2 is modified (phosphoserine). Residues serine 48, aspartate 193, and histidine 196 contribute to the active site.

This sequence belongs to the 'GDSL' lipolytic enzyme family. Platelet-activating factor acetylhydrolase IB beta/gamma subunits subfamily. In terms of assembly, forms a catalytic dimer which is either homodimer (alpha1/alpha1 homodimer) or heterodimer with PAFAH1B2 (alpha1/alpha2 heterodimer). Component of the cytosolic (PAF-AH (I)) heterotetrameric enzyme, which is composed of PAFAH1B1 (beta), PAFAH1B2 (alpha2) and PAFAH1B3 (alpha1) subunits. The catalytic activity of the enzyme resides in the alpha1 (PAFAH1B3) and alpha2 (PAFAH1B2) subunits, whereas the beta subunit (PAFAH1B1) has regulatory activity. Trimer formation is not essential for the catalytic activity. Interacts with VLDLR; this interaction may modulate the Reelin pathway. Expressed in brain, spleen, lung, liver, kidney and testis. Not expressed in heart and skeletal muscle. Expressed in fetal brain as heterodimer. Not expressed in adult tissues. Expressed exclusively in granule cells.

The protein resides in the cytoplasm. It catalyses the reaction a 1-O-alkyl-2-acetyl-sn-glycero-3-phosphocholine + H2O = a 1-O-alkyl-sn-glycero-3-phosphocholine + acetate + H(+). It carries out the reaction 1-O-hexadecyl-2-acetyl-sn-glycero-3-phosphocholine + H2O = 1-O-hexadecyl-sn-glycero-3-phosphocholine + acetate + H(+). The catalysed reaction is 1-O-hexadecyl-2-acetyl-sn-glycero-3-phosphate + H2O = 1-O-hexadecyl-sn-glycero-3-phosphate + acetate + H(+). With respect to regulation, beta subunit (PAFAH1B1) inhibits the acetylhydrolase activity of the alpha1/alpha1 catalytic homodimer. Its function is as follows. Alpha1 catalytic subunit of the cytosolic type I platelet-activating factor (PAF) acetylhydrolase (PAF-AH (I)) heterotetrameric enzyme that catalyzes the hydrolyze of the acetyl group at the sn-2 position of PAF and its analogs and modulates the action of PAF. The activity and substrate specificity of PAF-AH (I) are affected by its subunit composition. Both alpha1/alpha1 homodimer (PAFAH1B3/PAFAH1B3 homodimer) and alpha1/alpha2 heterodimer(PAFAH1B3/PAFAH1B2 heterodimer) hydrolyze 1-O-alkyl-2-acetyl-sn-glycero-3-phosphoric acid (AAGPA) more efficiently than PAF, but they have little hydrolytic activity towards 1-O-alkyl-2-acetyl-sn-glycero-3-phosphorylethanolamine (AAGPE). Plays an important role during the development of brain. This chain is Platelet-activating factor acetylhydrolase IB subunit alpha1, found in Rattus norvegicus (Rat).